A 285-amino-acid chain; its full sequence is Energy-coupling factor transporter ATP-binding protein EcfA2 (285 aa).

The ABC transporter domain maps to 6–242 (LKVEELNYNY…KEVIRKVNLR (237 aa)). 39-46 (GGNGVGKS) provides a ligand contact to ATP.

It belongs to the ABC transporter superfamily. Energy-coupling factor EcfA family. Forms a stable energy-coupling factor (ECF) transporter complex composed of 2 membrane-embedded substrate-binding proteins (S component), 2 ATP-binding proteins (A component) and 2 transmembrane proteins (T component).

The protein resides in the cell membrane. Functionally, ATP-binding (A) component of a common energy-coupling factor (ECF) ABC-transporter complex. Unlike classic ABC transporters this ECF transporter provides the energy necessary to transport a number of different substrates. The polypeptide is Energy-coupling factor transporter ATP-binding protein EcfA2 (Clostridium perfringens (strain SM101 / Type A)).